Consider the following 356-residue polypeptide: Glycerol-1-phosphate dehydrogenase [NAD(P)+] (356 aa).

Residues 103 to 107 (GRSID) and 125 to 128 (TAAS) each bind NAD(+). Asp-130 serves as a coordination point for substrate. An NAD(+)-binding site is contributed by Ser-134. Asp-177 is a binding site for substrate. Positions 177 and 257 each coordinate Zn(2+). His-261 is a binding site for substrate. His-273 serves as a coordination point for Zn(2+).

This sequence belongs to the glycerol-1-phosphate dehydrogenase family. Zn(2+) serves as cofactor.

The protein localises to the cytoplasm. It catalyses the reaction sn-glycerol 1-phosphate + NAD(+) = dihydroxyacetone phosphate + NADH + H(+). The catalysed reaction is sn-glycerol 1-phosphate + NADP(+) = dihydroxyacetone phosphate + NADPH + H(+). It functions in the pathway membrane lipid metabolism; glycerophospholipid metabolism. Catalyzes the NAD(P)H-dependent reduction of dihydroxyacetonephosphate (DHAP or glycerone phosphate) to glycerol 1-phosphate (G1P). The G1P thus generated is used as the glycerophosphate backbone of phospholipids in the cellular membranes of Archaea. This chain is Glycerol-1-phosphate dehydrogenase [NAD(P)+], found in Methanosarcina acetivorans (strain ATCC 35395 / DSM 2834 / JCM 12185 / C2A).